Here is a 370-residue protein sequence, read N- to C-terminus: Cobalt-precorrin-5B C(1)-methyltransferase (370 aa).

The protein belongs to the CbiD family.

It catalyses the reaction Co-precorrin-5B + S-adenosyl-L-methionine = Co-precorrin-6A + S-adenosyl-L-homocysteine. Its pathway is cofactor biosynthesis; adenosylcobalamin biosynthesis; cob(II)yrinate a,c-diamide from sirohydrochlorin (anaerobic route): step 6/10. Its function is as follows. Catalyzes the methylation of C-1 in cobalt-precorrin-5B to form cobalt-precorrin-6A. The protein is Cobalt-precorrin-5B C(1)-methyltransferase of Trichormus variabilis (strain ATCC 29413 / PCC 7937) (Anabaena variabilis).